A 233-amino-acid chain; its full sequence is Ubiquinone biosynthesis O-methyltransferase (233 aa).

S-adenosyl-L-methionine is bound by residues Arg-37, Gly-56, Asp-77, and Met-121.

This sequence belongs to the methyltransferase superfamily. UbiG/COQ3 family.

The catalysed reaction is a 3-demethylubiquinol + S-adenosyl-L-methionine = a ubiquinol + S-adenosyl-L-homocysteine + H(+). It carries out the reaction a 3-(all-trans-polyprenyl)benzene-1,2-diol + S-adenosyl-L-methionine = a 2-methoxy-6-(all-trans-polyprenyl)phenol + S-adenosyl-L-homocysteine + H(+). Its pathway is cofactor biosynthesis; ubiquinone biosynthesis. O-methyltransferase that catalyzes the 2 O-methylation steps in the ubiquinone biosynthetic pathway. The polypeptide is Ubiquinone biosynthesis O-methyltransferase (Azoarcus sp. (strain BH72)).